A 584-amino-acid chain; its full sequence is ETHYLENE INSENSITIVE 3-like 1 protein (584 aa).

Residues 41–74 (YTDDEMDVDELEKRMWRDKMRLKRLKEQQSKCKE) are a coiled coil. Basic and acidic residues predominate over residues 67-80 (EQQSKCKEGVDGSK). Disordered regions lie at residues 67-93 (EQQSKCKEGVDGSKQRQSQEQARRKKM) and 565-584 (EGMGKQQQQQQQQQDVSIWF).

This sequence belongs to the EIN3 family. As to quaternary structure, acts as a homodimer to bind the primary ethylene response element.

The protein resides in the nucleus. In terms of biological role, probable transcription factor acting as a positive regulator in the ethylene response pathway. Could bind the primary ethylene response element present in the ETHYLENE-RESPONSE-FACTOR1 promoter. This Arabidopsis thaliana (Mouse-ear cress) protein is ETHYLENE INSENSITIVE 3-like 1 protein (EIL1).